We begin with the raw amino-acid sequence, 203 residues long: Ras-related protein Rab5A (203 aa).

Position 18-26 (18-26) interacts with GTP; that stretch reads GDVGTGKSS. The Effector region signature appears at 40 to 48; the sequence is QESTIGAAF. Residues 66–70, 124–127, and 154–155 contribute to the GTP site; these read DTAGQ, NKAD, and SA. S-geranylgeranyl cysteine attachment occurs at residues Cys-201 and Cys-202.

This sequence belongs to the small GTPase superfamily. Rab family. As to quaternary structure, interacts with VPS9A. Interacts with NSF and RBP-L. As to expression, highly expressed in roots. Expressed at low levels in shoots, flowers and grains.

It localises to the prevacuolar compartment membrane. The protein localises to the golgi apparatus membrane. It is found in the cell membrane. Its subcellular location is the protein storage vacuole membrane. Its function is as follows. Plays an important role in intracellular trafficking of seed storage proteins to the protein storage vacuoles (PSVs). Participates in the transport of the proglutelins from the Golgi apparatus to the PSVs in endosperm. Functions cooperatively with VPS9A to regulate post-Golgi dense vesicle-mediated transport of storage proteins to the type II protein bodies (PBII) protein storage vacuoles in developing endosperm. Involved in the maintenance of the general structural organization of the endomembrane system in developing endosperm. Binds GTP in vitro. Forms a quaternary complex with the two glutelin zipcode RNA-binding proteins RBP-L and RBP-P, and the membrane trafficking factor NSF. This quaternay complex carries glutelin mRNAs for active transport on endosomes to the cortical endoplasmic reticulum membrane, and enables endosome-mediated glutelin mRNA transport in endosperm cells. The protein is Ras-related protein Rab5A of Oryza sativa subsp. japonica (Rice).